Here is a 261-residue protein sequence, read N- to C-terminus: 14-3-3-like protein GF14-12 (261 aa).

Belongs to the 14-3-3 family.

Its function is as follows. Is associated with a DNA binding complex to bind to the G box, a well-characterized cis-acting DNA regulatory element found in plant genes. The chain is 14-3-3-like protein GF14-12 (GRF2) from Zea mays (Maize).